Consider the following 247-residue polypeptide: MRTLVLIRHGESVWNRENRFTGWTDVGLTDKGAAEALRAGRTLKNEGFAFDEAFTSVLKRAIKTLWIVLEEMDQMWIPEHRHWRLNERHYGALQGLNKAETAERHGMEQVHVWRRSYDIPPPPLAAGDPRNPARDPRYAELDPADIPLTESLKDTVARFLPYWHETIAPRILAGRRLLIAAHGNSLRALVKYLDGIGDDAIAGLNIPTGIPLVYELEDDLHPIRSYYLGDPDEVARATQSVADQVKR.

Substrate-binding positions include 8–15 (RHGESVWN), 21–22 (TG), arginine 60, 87–90 (ERHY), lysine 98, 114–115 (RR), and 183–184 (GN). Histidine 9 serves as the catalytic Tele-phosphohistidine intermediate. The Proton donor/acceptor role is filled by glutamate 87.

The protein belongs to the phosphoglycerate mutase family. BPG-dependent PGAM subfamily. As to quaternary structure, homodimer.

The catalysed reaction is (2R)-2-phosphoglycerate = (2R)-3-phosphoglycerate. It functions in the pathway carbohydrate degradation; glycolysis; pyruvate from D-glyceraldehyde 3-phosphate: step 3/5. In terms of biological role, catalyzes the interconversion of 2-phosphoglycerate and 3-phosphoglycerate. The protein is 2,3-bisphosphoglycerate-dependent phosphoglycerate mutase of Geobacter sulfurreducens (strain ATCC 51573 / DSM 12127 / PCA).